We begin with the raw amino-acid sequence, 396 residues long: Tryptophan synthase beta chain (396 aa).

At lysine 86 the chain carries N6-(pyridoxal phosphate)lysine.

The protein belongs to the TrpB family. As to quaternary structure, tetramer of two alpha and two beta chains. Pyridoxal 5'-phosphate is required as a cofactor.

It carries out the reaction (1S,2R)-1-C-(indol-3-yl)glycerol 3-phosphate + L-serine = D-glyceraldehyde 3-phosphate + L-tryptophan + H2O. Its pathway is amino-acid biosynthesis; L-tryptophan biosynthesis; L-tryptophan from chorismate: step 5/5. Its function is as follows. The beta subunit is responsible for the synthesis of L-tryptophan from indole and L-serine. In Aliivibrio salmonicida (strain LFI1238) (Vibrio salmonicida (strain LFI1238)), this protein is Tryptophan synthase beta chain.